Reading from the N-terminus, the 189-residue chain is Ornithine decarboxylase antizyme 2 (189 aa).

S186 is modified (phosphoserine).

Belongs to the ODC antizyme family. Interacts with ODC1 and thereby sterically blocks ODC homodimerization. Interacts with AZIN2; this interaction disrupts the interaction between the antizyme and ODC1.

It is found in the nucleus. In terms of biological role, ornithine decarboxylase (ODC) antizyme protein that negatively regulates ODC activity and intracellular polyamine biosynthesis and uptake in response to increased intracellular polyamine levels. Binds to ODC monomers, inhibiting the assembly of the functional ODC homodimers. Does not target the ODC monomers for degradation, which allows a protein synthesis-independent restoration of ODC activity. Involved in the translocation of AZIN2 from ER-Golgi intermediate compartment (ERGIC) to the cytosol. This chain is Ornithine decarboxylase antizyme 2 (Oaz2), found in Mus musculus (Mouse).